The primary structure comprises 100 residues: Nucleoid-associated protein ckrop_0143 (100 aa).

It belongs to the YbaB/EbfC family. As to quaternary structure, homodimer.

Its subcellular location is the cytoplasm. The protein localises to the nucleoid. Its function is as follows. Binds to DNA and alters its conformation. May be involved in regulation of gene expression, nucleoid organization and DNA protection. This chain is Nucleoid-associated protein ckrop_0143, found in Corynebacterium kroppenstedtii (strain DSM 44385 / JCM 11950 / CIP 105744 / CCUG 35717).